The chain runs to 124 residues: Large ribosomal subunit protein bL12 (124 aa).

It belongs to the bacterial ribosomal protein bL12 family. Homodimer. Part of the ribosomal stalk of the 50S ribosomal subunit. Forms a multimeric L10(L12)X complex, where L10 forms an elongated spine to which 2 to 4 L12 dimers bind in a sequential fashion. Binds GTP-bound translation factors.

Its function is as follows. Forms part of the ribosomal stalk which helps the ribosome interact with GTP-bound translation factors. Is thus essential for accurate translation. The chain is Large ribosomal subunit protein bL12 from Bacteroides thetaiotaomicron (strain ATCC 29148 / DSM 2079 / JCM 5827 / CCUG 10774 / NCTC 10582 / VPI-5482 / E50).